Reading from the N-terminus, the 418-residue chain is Histidinol dehydrogenase (418 aa).

3 residues coordinate NAD(+): Tyr119, Gln180, and Asn203. Substrate is bound by residues Thr226, Gln248, and His251. Zn(2+) contacts are provided by Gln248 and His251. Residues Glu316 and His317 each act as proton acceptor in the active site. Residues His317, Asp350, Glu404, and His409 each contribute to the substrate site. Asp350 is a Zn(2+) binding site. Position 409 (His409) interacts with Zn(2+).

The protein belongs to the histidinol dehydrogenase family. The cofactor is Zn(2+).

The enzyme catalyses L-histidinol + 2 NAD(+) + H2O = L-histidine + 2 NADH + 3 H(+). Its pathway is amino-acid biosynthesis; L-histidine biosynthesis; L-histidine from 5-phospho-alpha-D-ribose 1-diphosphate: step 9/9. Functionally, catalyzes the sequential NAD-dependent oxidations of L-histidinol to L-histidinaldehyde and then to L-histidine. The chain is Histidinol dehydrogenase from Staphylococcus aureus (strain MSSA476).